Here is a 104-residue protein sequence, read N- to C-terminus: Pyrimidine/purine nucleoside phosphorylase (104 aa).

This sequence belongs to the nucleoside phosphorylase PpnP family.

It catalyses the reaction a purine D-ribonucleoside + phosphate = a purine nucleobase + alpha-D-ribose 1-phosphate. It carries out the reaction adenosine + phosphate = alpha-D-ribose 1-phosphate + adenine. The catalysed reaction is cytidine + phosphate = cytosine + alpha-D-ribose 1-phosphate. The enzyme catalyses guanosine + phosphate = alpha-D-ribose 1-phosphate + guanine. It catalyses the reaction inosine + phosphate = alpha-D-ribose 1-phosphate + hypoxanthine. It carries out the reaction thymidine + phosphate = 2-deoxy-alpha-D-ribose 1-phosphate + thymine. The catalysed reaction is uridine + phosphate = alpha-D-ribose 1-phosphate + uracil. The enzyme catalyses xanthosine + phosphate = alpha-D-ribose 1-phosphate + xanthine. In terms of biological role, catalyzes the phosphorolysis of diverse nucleosides, yielding D-ribose 1-phosphate and the respective free bases. Can use uridine, adenosine, guanosine, cytidine, thymidine, inosine and xanthosine as substrates. Also catalyzes the reverse reactions. In Thiobacillus denitrificans (strain ATCC 25259 / T1), this protein is Pyrimidine/purine nucleoside phosphorylase.